We begin with the raw amino-acid sequence, 25 residues long: Grammistin Pp 3 (25 aa).

The protein belongs to the grammistin family. Group 3 subfamily. As to quaternary structure, exists as aggregates of 3-4 molecules. As to expression, expressed by the skin glands.

It is found in the secreted. Functionally, thanks to its abundant amphiphilic alpha-helices, it may integrate into membrane phospholipids, leading to lysis of the membrane. Has hemolytic activity. Has antibacterial activity with a broad spectrum against various species of bacteria including both Gram-positive and Gram-negative groups. Also has ichthyotoxic activity. The sequence is that of Grammistin Pp 3 from Pogonoperca punctata (Clown grouper).